The chain runs to 325 residues: Serine/threonine-protein phosphatase 2A activator 1 (325 aa).

It belongs to the PTPA-type PPIase family.

The protein resides in the cytoplasm. The protein localises to the nucleus. It catalyses the reaction [protein]-peptidylproline (omega=180) = [protein]-peptidylproline (omega=0). In terms of biological role, PPIases accelerate the folding of proteins. It catalyzes the cis-trans isomerization of proline imidic peptide bonds in oligopeptides. Acts as a regulatory subunit for PP2A-like phosphatases modulating their activity or substrate specificity, probably by inducing a conformational change in the catalytic subunit, a direct target of the PPIase. Can reactivate inactive phosphatase PP2A-phosphatase methylesterase complexes (PP2Ai) in presence of ATP and Mg(2+) by dissociating the inactive form from the complex. This Schizosaccharomyces pombe (strain 972 / ATCC 24843) (Fission yeast) protein is Serine/threonine-protein phosphatase 2A activator 1 (rrd1).